We begin with the raw amino-acid sequence, 314 residues long: uncharacterized protein (314 aa).

The signal sequence occupies residues 1 to 26; it reads MRGRVAGSCAPLGLLLVCLRLPGLFA. Positions 41 to 60 are enriched in polar residues; the sequence is GTNLPQLGQPSLTGPPNSEH. Disordered regions lie at residues 41–65, 77–96, 147–191, and 292–314; these read GTNL…QPAL, LKLS…SAVQ, GSGP…GKIL, and PPGS…LQWG. The segment covering 147–157 has biased composition (low complexity); it reads GSGPLPGESSP. The segment covering 167 to 177 has biased composition (basic and acidic residues); sequence SHLHQDSESRR. Pro residues predominate over residues 303-314; it reads FPNPPSPGLQWG.

As to quaternary structure, binds to numerous extracellular matrix proteins. As to expression, taste cell specific.

Its subcellular location is the secreted. It is found in the extracellular space. The protein resides in the extracellular matrix. This is an uncharacterized protein from Macaca mulatta (Rhesus macaque).